Consider the following 320-residue polypeptide: Solute carrier family 25 member 33 (320 aa).

3 Solcar repeats span residues 9–118 (ENTL…AKEQ), 126–213 (NSNT…LKKC), and 231–315 (SGFF…IVYL). A run of 6 helical transmembrane segments spans residues 12–32 (LLHLFAGGCGGTVGAIFTCPL), 49–65 (VYYPQVHLGTISGAGMV), 121–141 (GIFVPNSNTVHILSAGSAAFV), 190–210 (LTASYAGISETIICFAIYESL), 233–253 (FFGLMAAAAVSKGCASCIAYP), and 298–318 (QIPNTAIVLSTYEFIVYLLGE).

Belongs to the mitochondrial carrier (TC 2.A.29) family.

Its subcellular location is the mitochondrion inner membrane. The enzyme catalyses UTP(in) + UDP(out) = UTP(out) + UDP(in). It catalyses the reaction dUTP(out) + UTP(in) = dUTP(in) + UTP(out). It carries out the reaction 5-methyl-UTP(out) + UTP(in) = 5-methyl-UTP(in) + UTP(out). The catalysed reaction is 5-methyl-UDP(out) + UTP(in) = 5-methyl-UDP(in) + UTP(out). The enzyme catalyses UTP(in) + CTP(out) = UTP(out) + CTP(in). It catalyses the reaction CDP(out) + UTP(in) = CDP(in) + UTP(out). It carries out the reaction dCTP(out) + UTP(in) = dCTP(in) + UTP(out). The catalysed reaction is dCDP(out) + UTP(in) = dCDP(in) + UTP(out). The enzyme catalyses UTP(in) + GTP(out) = UTP(out) + GTP(in). It catalyses the reaction UTP(in) + GDP(out) = UTP(out) + GDP(in). It carries out the reaction dGTP(out) + UTP(in) = dGTP(in) + UTP(out). The catalysed reaction is dGDP(out) + UTP(in) = dGDP(in) + UTP(out). The enzyme catalyses ITP(out) + UTP(in) = ITP(in) + UTP(out). Mitochondrial transporter that imports/exports pyrimidine nucleotides into and from mitochondria. Selectively transports uridine, thymidine, guanosine, cytosine and inosine (deoxy)nucleoside di- and triphosphates by an antiport mechanism. May import (deoxy)nucleoside triphosphates in exchange for intramitochondrial (deoxy)nucleoside diphosphates, thus providing precursors necessary for de novo synthesis of mitochondrial DNA and RNA while exporting products of their catabolism. Participates in mitochondrial genome maintenance, regulation of mitochondrial membrane potential and mitochondrial respiration. Upon INS or IGF1 stimulation regulates cell growth and proliferation by controlling mitochondrial DNA replication and transcription, the ratio of mitochondria-to nuclear-encoded components of the electron transport chain resulting in control of mitochondrial ROS production. Participates in dendritic cell endocytosis and may associate with mitochondrial oxidative phosphorylation. The sequence is that of Solute carrier family 25 member 33 (Slc25a33) from Mus musculus (Mouse).